The sequence spans 447 residues: Dirigent protein 10 (447 aa).

Positions 1-21 (MAGQKILSLLVIALVVTFAAA) are cleaved as a signal peptide. The segment covering 74–85 (SGSTGSGLGAGT) has biased composition (gly residues). The disordered stretch occupies residues 74–123 (SGSTGSGLGAGTGSIPSSGSGPGLLPTASSVPGSLAGGGSGSLPTTGSAT). Residues 86–107 (GSIPSSGSGPGLLPTASSVPGS) show a composition bias toward low complexity.

The protein belongs to the plant dirigent protein family. As to quaternary structure, homodimer. As to expression, in roots, mostly detected in root endodermis and quiescent center, and, to a lower extent, in root stele and cortex. Expressed in root vascular cylinder, flowers, siliques, cotyledon and leaf veins, and leaf margins. Present in the basal region of rosette leaf trichomes and in developing xylem.

The protein localises to the secreted. The protein resides in the extracellular space. Its subcellular location is the apoplast. In terms of biological role, dirigent proteins impart stereoselectivity on the phenoxy radical-coupling reaction, yielding optically active lignans from two molecules of coniferyl alcohol in the biosynthesis of lignans, flavonolignans, and alkaloids and thus plays a central role in plant secondary metabolism. Regulates suberin accumulation in roots. This is Dirigent protein 10 (DIR10) from Arabidopsis thaliana (Mouse-ear cress).